Consider the following 226-residue polypeptide: Orotate phosphoribosyltransferase (226 aa).

Lys29 is a binding site for 5-phospho-alpha-D-ribose 1-diphosphate. 37 to 38 (FF) provides a ligand contact to orotate. Residues 75–76 (YK), Arg101, Lys102, Lys105, His107, and 126–134 (DDVISAGTS) each bind 5-phospho-alpha-D-ribose 1-diphosphate. 2 residues coordinate orotate: Ser130 and Arg158.

The protein belongs to the purine/pyrimidine phosphoribosyltransferase family. PyrE subfamily. As to quaternary structure, homodimer. It depends on Mg(2+) as a cofactor.

The catalysed reaction is orotidine 5'-phosphate + diphosphate = orotate + 5-phospho-alpha-D-ribose 1-diphosphate. It participates in pyrimidine metabolism; UMP biosynthesis via de novo pathway; UMP from orotate: step 1/2. In terms of biological role, catalyzes the transfer of a ribosyl phosphate group from 5-phosphoribose 1-diphosphate to orotate, leading to the formation of orotidine monophosphate (OMP). The protein is Orotate phosphoribosyltransferase of Ralstonia nicotianae (strain ATCC BAA-1114 / GMI1000) (Ralstonia solanacearum).